A 115-amino-acid polypeptide reads, in one-letter code: Phosphoribosyl-AMP cyclohydrolase (115 aa).

D80 provides a ligand contact to Mg(2+). C81 is a binding site for Zn(2+). Mg(2+) contacts are provided by D82 and D84. Positions 97 and 104 each coordinate Zn(2+).

This sequence belongs to the PRA-CH family. In terms of assembly, homodimer. It depends on Mg(2+) as a cofactor. Zn(2+) serves as cofactor.

Its subcellular location is the cytoplasm. The catalysed reaction is 1-(5-phospho-beta-D-ribosyl)-5'-AMP + H2O = 1-(5-phospho-beta-D-ribosyl)-5-[(5-phospho-beta-D-ribosylamino)methylideneamino]imidazole-4-carboxamide. The protein operates within amino-acid biosynthesis; L-histidine biosynthesis; L-histidine from 5-phospho-alpha-D-ribose 1-diphosphate: step 3/9. In terms of biological role, catalyzes the hydrolysis of the adenine ring of phosphoribosyl-AMP. The chain is Phosphoribosyl-AMP cyclohydrolase from Mycobacterium sp. (strain MCS).